The primary structure comprises 843 residues: Translation initiation factor IF-2 (843 aa).

The interval 198–219 (YKREEEEKKSKAKKAGGKGFKK) is disordered. The span at 207–219 (SKAKKAGGKGFKK) shows a compositional bias: basic residues. Residues 345-512 (SRAPVVTIMG…AVLLQSEVLE (168 aa)) form the tr-type G domain. Residues 354 to 361 (GHVDHGKT) are G1. 354-361 (GHVDHGKT) lines the GTP pocket. Positions 379 to 383 (GITQH) are G2. The G3 stretch occupies residues 400–403 (DTPG). Residues 400-404 (DTPGH) and 454-457 (NKID) each bind GTP. The tract at residues 454–457 (NKID) is G4. The G5 stretch occupies residues 490 to 492 (SAK).

Belongs to the TRAFAC class translation factor GTPase superfamily. Classic translation factor GTPase family. IF-2 subfamily.

It is found in the cytoplasm. Its function is as follows. One of the essential components for the initiation of protein synthesis. Protects formylmethionyl-tRNA from spontaneous hydrolysis and promotes its binding to the 30S ribosomal subunits. Also involved in the hydrolysis of GTP during the formation of the 70S ribosomal complex. In Francisella tularensis subsp. tularensis (strain WY96-3418), this protein is Translation initiation factor IF-2.